Consider the following 589-residue polypeptide: Malto-oligosyltrehalose trehalohydrolase (589 aa).

256-261 lines the substrate pocket; the sequence is GFDAVH. Residue Asp258 is the Nucleophile of the active site. The active-site Proton donor is the Glu295. Substrate contacts are provided by residues 320–324 and 390–395; these read DDFHT and HDQIGN.

Belongs to the glycosyl hydrolase 13 family.

The protein resides in the cytoplasm. It carries out the reaction hydrolysis of (1-&gt;4)-alpha-D-glucosidic linkage in 4-alpha-D-[(1-&gt;4)-alpha-D-glucanosyl]n trehalose to yield trehalose and (1-&gt;4)-alpha-D-glucan.. The protein operates within glycan biosynthesis; trehalose biosynthesis. The chain is Malto-oligosyltrehalose trehalohydrolase (treZ) from Brevibacterium helvolum.